The sequence spans 148 residues: Large ribosomal subunit protein bL9 (148 aa).

Belongs to the bacterial ribosomal protein bL9 family.

Functionally, binds to the 23S rRNA. In Listeria welshimeri serovar 6b (strain ATCC 35897 / DSM 20650 / CCUG 15529 / CIP 8149 / NCTC 11857 / SLCC 5334 / V8), this protein is Large ribosomal subunit protein bL9.